The sequence spans 293 residues: SAGA-associated factor 29 (293 aa).

Residues 3 to 86 (LVSADSRIAE…LRKALDKIAE (84 aa)) adopt a coiled-coil conformation. Residues 152–293 (GDYVAKPGDK…VVACKEPKKK (142 aa)) form the SGF29 C-terminal domain. 2 histone H3K4me3 N-terminus binding regions span residues 194–196 (DID) and 240–243 (QTTC). The histone H3K4me3 binding stretch occupies residues 264-266 (FED). N6-acetyllysine is present on K288.

It belongs to the SGF29 family. Interacts with dimethylated and trimethylated 'Lys-4' of histone H3 (H3K4me2 and H3K4me3), with a preference for the trimethylated form (H3K4me3). Component of some SAGA-type complexes. Component of the ADA2A-containing complex (ATAC), composed of KAT14, KAT2A, TADA2L, TADA3L, ZZ3, MBIP, WDR5, YEATS2, CCDC101 and DR1. Interacts with (methylated) CGAS. Interacts with TADA3L, GCN5L2, SUPT3H and MYC.

Its subcellular location is the nucleus. Functionally, chromatin reader component of some histone acetyltransferase (HAT) SAGA-type complexes like the TFTC-HAT, ATAC or STAGA complexes. SGF29 specifically recognizes and binds methylated 'Lys-4' of histone H3 (H3K4me), with a preference for trimethylated form (H3K4me3). In the SAGA-type complexes, SGF29 is required to recruit complexes to H3K4me. Involved in the response to endoplasmic reticulum (ER) stress by recruiting the SAGA complex to H3K4me, thereby promoting histone H3 acetylation and cell survival. Also binds non-histone proteins that are methylated on Lys residues: specifically recognizes and binds CGAS monomethylated on 'Lys-491'. This Mus musculus (Mouse) protein is SAGA-associated factor 29.